The following is a 481-amino-acid chain: Arylsulfatase (481 aa).

Ca(2+)-binding residues include Asp-11, Gln-12, and Cys-51. Cys-51 acts as the Nucleophile in catalysis. Cys-51 bears the 3-oxoalanine (Cys) mark. Residue His-102 is part of the active site. Ca(2+) contacts are provided by Asp-302 and His-303.

The protein belongs to the sulfatase family. Ca(2+) is required as a cofactor. In terms of processing, the conversion to 3-oxoalanine (also known as C-formylglycine, FGly), of a serine or cysteine residue in prokaryotes and of a cysteine residue in eukaryotes, is critical for catalytic activity.

It carries out the reaction an aryl sulfate + H2O = a phenol + sulfate + H(+). In terms of biological role, has sulfatase activity toward para-nitrophenyl sulfate, which is increased in presence of calcium ion. In Clostridium perfringens (strain 13 / Type A), this protein is Arylsulfatase.